Consider the following 431-residue polypeptide: Enolase (431 aa).

Gln168 contributes to the (2R)-2-phosphoglycerate binding site. The active-site Proton donor is the Glu210. Positions 247, 291, and 318 each coordinate Mg(2+). (2R)-2-phosphoglycerate-binding residues include Lys343, Arg372, Ser373, and Lys394. The active-site Proton acceptor is Lys343.

The protein belongs to the enolase family. Component of the RNA degradosome, a multiprotein complex involved in RNA processing and mRNA degradation. Requires Mg(2+) as cofactor.

Its subcellular location is the cytoplasm. The protein localises to the secreted. The protein resides in the cell surface. The catalysed reaction is (2R)-2-phosphoglycerate = phosphoenolpyruvate + H2O. The protein operates within carbohydrate degradation; glycolysis; pyruvate from D-glyceraldehyde 3-phosphate: step 4/5. Catalyzes the reversible conversion of 2-phosphoglycerate (2-PG) into phosphoenolpyruvate (PEP). It is essential for the degradation of carbohydrates via glycolysis. In Acinetobacter baumannii (strain AYE), this protein is Enolase.